A 204-amino-acid chain; its full sequence is Ribonuclease HII (204 aa).

An RNase H type-2 domain is found at 1–197 (MILGIDEAGR…KNRILNPKLL (197 aa)). A divalent metal cation is bound by residues Asp-6, Glu-7, and Asp-103.

Belongs to the RNase HII family. Requires Mn(2+) as cofactor. It depends on Mg(2+) as a cofactor.

It is found in the cytoplasm. The enzyme catalyses Endonucleolytic cleavage to 5'-phosphomonoester.. Its function is as follows. Endonuclease that specifically degrades the RNA of RNA-DNA hybrids. This Helicobacter pylori (strain G27) protein is Ribonuclease HII.